The chain runs to 239 residues: Probable 2-phosphosulfolactate phosphatase (239 aa).

The protein belongs to the ComB family. Mg(2+) serves as cofactor.

It catalyses the reaction (2R)-O-phospho-3-sulfolactate + H2O = (2R)-3-sulfolactate + phosphate. This Clostridium botulinum (strain Okra / Type B1) protein is Probable 2-phosphosulfolactate phosphatase.